Here is a 374-residue protein sequence, read N- to C-terminus: Probable phosphoserine aminotransferase (374 aa).

An L-glutamate-binding site is contributed by R48. Pyridoxal 5'-phosphate contacts are provided by residues 82 to 83, W110, T160, D183, and Q206; that span reads AS. K207 carries the post-translational modification N6-(pyridoxal phosphate)lysine. 248–249 serves as a coordination point for pyridoxal 5'-phosphate; sequence NT.

It belongs to the class-V pyridoxal-phosphate-dependent aminotransferase family. SerC subfamily. Homodimer. Pyridoxal 5'-phosphate is required as a cofactor.

The catalysed reaction is O-phospho-L-serine + 2-oxoglutarate = 3-phosphooxypyruvate + L-glutamate. It catalyses the reaction 4-(phosphooxy)-L-threonine + 2-oxoglutarate = (R)-3-hydroxy-2-oxo-4-phosphooxybutanoate + L-glutamate. The protein operates within amino-acid biosynthesis; L-serine biosynthesis; L-serine from 3-phospho-D-glycerate: step 2/3. It participates in cofactor biosynthesis; pyridoxine 5'-phosphate biosynthesis; pyridoxine 5'-phosphate from D-erythrose 4-phosphate: step 3/5. Functionally, catalyzes the reversible conversion of 3-phosphohydroxypyruvate to phosphoserine and of 3-hydroxy-2-oxo-4-phosphonooxybutanoate to phosphohydroxythreonine. This Dictyostelium discoideum (Social amoeba) protein is Probable phosphoserine aminotransferase (serC).